Consider the following 630-residue polypeptide: Eukaryotic translation initiation factor 2-alpha kinase 1 (630 aa).

Residues 1 to 40 form a disordered region; the sequence is MQGGNSGVRKREEEGDGAGAVAAPPAIDFPAEGPDPEYDE. An SIFI-degron motif is present at residues 85–104; that stretch reads LRSRQVFKLLCQTFIKMGLL. Residues 167–583 enclose the Protein kinase domain; it reads FEELAILGKG…AIQLLQSELF (417 aa). Residues 173–181 and K196 each bind ATP; that span reads LGKGGYGRV. Positions 259–301 are disordered; sequence DQEEDREQCGVKNDESSSSSIIFAEPTPEKEKRFGESDTENQN. T285 is modified (phosphothreonine). Residues 285 to 294 show a composition bias toward basic and acidic residues; sequence TPEKEKRFGE. One copy of the HRM 1 repeat lies at 410-415; the sequence is ACPYVM. D442 acts as the Proton acceptor in catalysis. 2 positions are modified to phosphothreonine; by autocatalysis: T486 and T488. At T493 the chain carries Phosphothreonine. The HRM 2 repeat unit spans residues 552-557; sequence RCPVQA.

It belongs to the protein kinase superfamily. Ser/Thr protein kinase family. GCN2 subfamily. Synthesized in an inactive form that binds to the N-terminal domain of CDC37. Has to be associated with a multiprotein complex containing Hsp90, CDC37 and PPP5C for maturation and activation by autophosphorylation. The phosphatase PPP5C modulates this activation. Homodimer; homodimerizes in presence of heme, forming a disulfide-linked inactive homodimer. Interacts with DELE1; binds both to full-length DELE1 and processed form of DELE1 (S-DELE1) in response to stress, leading to activate its protein kinase activity and trigger the integrated stress response (ISR). Activated by autophosphorylation; phosphorylated predominantly on serine and threonine residues, but also on tyrosine residues. Autophosphorylation at Thr-488 is required for kinase activation. The active autophosphorylated form apparently is largely refractory to cellular heme fluctuations. Post-translationally, ubiquitinated and degraded by the SIFI complex once the mitochondrial stress has been resolved, thereby providing stress response silencing. Within the SIFI complex, UBR4 initiates ubiquitin chain that are further elongated or branched by KCMF1.

It catalyses the reaction L-seryl-[protein] + ATP = O-phospho-L-seryl-[protein] + ADP + H(+). The enzyme catalyses L-threonyl-[protein] + ATP = O-phospho-L-threonyl-[protein] + ADP + H(+). In normal conditions, the protein kinase activity is inhibited; inhibition is relieved by various stress conditions. Inhibited by heme: in presence of heme, forms a disulfide-linked inactive homodimer. Heme depletion relieves inhibition and stimulates kinase activity by autophosphorylation. Inhibited by the heme metabolites biliverdin and bilirubin. Induced by oxidative stress generated by arsenite treatment. Binding of nitric oxide (NO) to the heme iron in the N-terminal heme-binding domain activates the kinase activity, while binding of carbon monoxide (CO) suppresses kinase activity. Protein kinase activity is also activated upon binding to DELE1 in response to various stress, triggering the integrated stress response (ISR): activated by full-length DELE1 in response to iron deficiency, while it is activated by the processed form of DELE1 (S-DELE1) in response to mitochondrial stress. Metabolic-stress sensing protein kinase that phosphorylates the alpha subunit of eukaryotic translation initiation factor 2 (EIF2S1/eIF-2-alpha) in response to various stress conditions. Key activator of the integrated stress response (ISR) required for adaptation to various stress, such as heme deficiency, oxidative stress, osmotic shock, mitochondrial dysfunction and heat shock. EIF2S1/eIF-2-alpha phosphorylation in response to stress converts EIF2S1/eIF-2-alpha in a global protein synthesis inhibitor, leading to a global attenuation of cap-dependent translation, while concomitantly initiating the preferential translation of ISR-specific mRNAs, such as the transcriptional activator ATF4, and hence allowing ATF4-mediated reprogramming. Acts as a key sensor of heme-deficiency: in normal conditions, binds hemin via a cysteine thiolate and histidine nitrogenous coordination, leading to inhibit the protein kinase activity. This binding occurs with moderate affinity, allowing it to sense the heme concentration within the cell: heme depletion relieves inhibition and stimulates kinase activity, activating the ISR. Thanks to this unique heme-sensing capacity, plays a crucial role to shut off protein synthesis during acute heme-deficient conditions. In red blood cells (RBCs), controls hemoglobin synthesis ensuring a coordinated regulation of the synthesis of its heme and globin moieties. It thereby plays an essential protective role for RBC survival in anemias of iron deficiency. Iron deficiency also triggers activation by full-length DELE1. Also activates the ISR in response to mitochondrial dysfunction: HRI/EIF2AK1 protein kinase activity is activated upon binding to the processed form of DELE1 (S-DELE1), thereby promoting the ATF4-mediated reprogramming. Also acts as an activator of mitophagy in response to mitochondrial damage: catalyzes phosphorylation of eIF-2-alpha (EIF2S1) following activation by S-DELE1, thereby promoting mitochondrial localization of EIF2S1, triggering PRKN-independent mitophagy. This is Eukaryotic translation initiation factor 2-alpha kinase 1 from Homo sapiens (Human).